Reading from the N-terminus, the 124-residue chain is Small ribosomal subunit protein uS12 (124 aa).

3-methylthioaspartic acid is present on D89.

The protein belongs to the universal ribosomal protein uS12 family. In terms of assembly, part of the 30S ribosomal subunit. Contacts proteins S8 and S17. May interact with IF1 in the 30S initiation complex.

In terms of biological role, with S4 and S5 plays an important role in translational accuracy. Functionally, interacts with and stabilizes bases of the 16S rRNA that are involved in tRNA selection in the A site and with the mRNA backbone. Located at the interface of the 30S and 50S subunits, it traverses the body of the 30S subunit contacting proteins on the other side and probably holding the rRNA structure together. The combined cluster of proteins S8, S12 and S17 appears to hold together the shoulder and platform of the 30S subunit. The chain is Small ribosomal subunit protein uS12 from Shewanella amazonensis (strain ATCC BAA-1098 / SB2B).